The primary structure comprises 216 residues: Flagellin B2 (216 aa).

Positions 1 to 12 (MKIKEFMSNKKG) are excised as a propeptide. 6 N-linked (GlcNAc...) asparagine glycosylation sites follow: N38, N72, N77, N113, N172, and N208.

This sequence belongs to the archaeal flagellin family. In terms of processing, N-linked glycans consist of the 779 Da trisaccharide beta-ManNAc(Thr)-(1-4)-beta-GlcNAc3NAcA-(1-3)-beta-GlcNAc.

The protein localises to the archaeal flagellum. Its function is as follows. Flagellin is the subunit protein which polymerizes to form the filaments of archaeal flagella. This Methanococcus voltae protein is Flagellin B2 (flaB2).